Here is a 171-residue protein sequence, read N- to C-terminus: Crossover junction endodeoxyribonuclease RuvC (171 aa).

Catalysis depends on residues Asp-12, Glu-72, and Asp-144. Mg(2+) is bound by residues Asp-12, Glu-72, and Asp-144.

Belongs to the RuvC family. Homodimer which binds Holliday junction (HJ) DNA. The HJ becomes 2-fold symmetrical on binding to RuvC with unstacked arms; it has a different conformation from HJ DNA in complex with RuvA. In the full resolvosome a probable DNA-RuvA(4)-RuvB(12)-RuvC(2) complex forms which resolves the HJ. Requires Mg(2+) as cofactor.

Its subcellular location is the cytoplasm. It catalyses the reaction Endonucleolytic cleavage at a junction such as a reciprocal single-stranded crossover between two homologous DNA duplexes (Holliday junction).. Functionally, the RuvA-RuvB-RuvC complex processes Holliday junction (HJ) DNA during genetic recombination and DNA repair. Endonuclease that resolves HJ intermediates. Cleaves cruciform DNA by making single-stranded nicks across the HJ at symmetrical positions within the homologous arms, yielding a 5'-phosphate and a 3'-hydroxyl group; requires a central core of homology in the junction. The consensus cleavage sequence is 5'-(A/T)TT(C/G)-3'. Cleavage occurs on the 3'-side of the TT dinucleotide at the point of strand exchange. HJ branch migration catalyzed by RuvA-RuvB allows RuvC to scan DNA until it finds its consensus sequence, where it cleaves and resolves the cruciform DNA. The protein is Crossover junction endodeoxyribonuclease RuvC of Afipia carboxidovorans (strain ATCC 49405 / DSM 1227 / KCTC 32145 / OM5) (Oligotropha carboxidovorans).